The primary structure comprises 354 residues: Neuronal growth regulator 1 (354 aa).

The first 37 residues, 1-37, serve as a signal peptide directing secretion; that stretch reads MDMMLLVQGACCSNQWLAAVLLSLCCLLPSCLPAGQS. 3 Ig-like C2-type domains span residues 38 to 134, 139 to 221, and 225 to 313; these read VDFP…VHLT, PKIY…KVVV, and PTIQ…LPLN. A disulfide bridge connects residues Cys-60 and Cys-118. 2 N-linked (GlcNAc...) asparagine glycosylation sites follow: Asn-73 and Asn-155. 2 disulfides stabilise this stretch: Cys-160/Cys-203 and Cys-245/Cys-297. A Phosphotyrosine modification is found at Tyr-187. 4 N-linked (GlcNAc...) asparagine glycosylation sites follow: Asn-275, Asn-286, Asn-294, and Asn-307. A lipid anchor (GPI-anchor amidated glycine) is attached at Gly-324. Positions 325–354 are cleaved as a propeptide — removed in mature form; that stretch reads SADVLFSCWYLVLTLSSFTSIFYLKNAILQ.

It belongs to the immunoglobulin superfamily. IgLON family.

The protein resides in the cell membrane. Functionally, may be involved in cell-adhesion. May function as a trans-neural growth-promoting factor in regenerative axon sprouting in the mammalian brain. This Pongo abelii (Sumatran orangutan) protein is Neuronal growth regulator 1 (NEGR1).